The primary structure comprises 617 residues: Leucine aminopeptidase 2 (617 aa).

A peptide-binding positions include 139–141 and 271–276; these read QCQ and PYGGME. His300 is a binding site for Zn(2+). Glu301 acts as the Proton acceptor in catalysis. His304 and Glu323 together coordinate Zn(2+). Tyr388 (proton donor) is an active-site residue.

The protein belongs to the peptidase M1 family. Zn(2+) serves as cofactor.

Its subcellular location is the cytoplasm. It is found in the nucleus. It carries out the reaction an epoxide + H2O = an ethanediol. Aminopeptidase that preferentially cleaves di- and tripeptides. Also has low epoxide hydrolase activity (in vitro). Can hydrolyze the epoxide leukotriene LTA(4) but it forms preferentially 5,6-dihydroxy-7,9,11,14-eicosatetraenoic acid rather than the cytokine leukotriene B(4) as the product compared to the homologous mammalian enzyme (in vitro). This is Leucine aminopeptidase 2 from Neosartorya fischeri (strain ATCC 1020 / DSM 3700 / CBS 544.65 / FGSC A1164 / JCM 1740 / NRRL 181 / WB 181) (Aspergillus fischerianus).